Reading from the N-terminus, the 590-residue chain is Aspartate--tRNA(Asp/Asn) ligase (590 aa).

Glu-175 is a binding site for L-aspartate. Residues 199–202 are aspartate; it reads QQYK. Arg-221 and His-450 together coordinate L-aspartate. An ATP-binding site is contributed by 221 to 223; the sequence is RDE. Position 484 (Glu-484) interacts with ATP. An L-aspartate-binding site is contributed by Arg-491. Position 536–539 (536–539) interacts with ATP; the sequence is GVDR.

The protein belongs to the class-II aminoacyl-tRNA synthetase family. Type 1 subfamily. Homodimer.

The protein resides in the cytoplasm. The enzyme catalyses tRNA(Asx) + L-aspartate + ATP = L-aspartyl-tRNA(Asx) + AMP + diphosphate. In terms of biological role, aspartyl-tRNA synthetase with relaxed tRNA specificity since it is able to aspartylate not only its cognate tRNA(Asp) but also tRNA(Asn). Reaction proceeds in two steps: L-aspartate is first activated by ATP to form Asp-AMP and then transferred to the acceptor end of tRNA(Asp/Asn). The polypeptide is Aspartate--tRNA(Asp/Asn) ligase (Nitrobacter hamburgensis (strain DSM 10229 / NCIMB 13809 / X14)).